A 325-amino-acid polypeptide reads, in one-letter code: NADH-quinone oxidoreductase subunit H (325 aa).

Transmembrane regions (helical) follow at residues 11-31, 50-69, 81-101, 114-134, 154-174, 186-206, 237-257, 265-285, and 304-324; these read ILLS…CGAF, NRVG…KMFF, VIFT…FAIV, IGIL…LFAG, VSYE…AGSF, LWNV…GVAV, FFVG…TLFF, LPPF…FILI, and VCLP…LWQA.

Belongs to the complex I subunit 1 family. NDH-1 is composed of 13 different subunits. Subunits NuoA, H, J, K, L, M, N constitute the membrane sector of the complex.

It is found in the cell inner membrane. The enzyme catalyses a quinone + NADH + 5 H(+)(in) = a quinol + NAD(+) + 4 H(+)(out). Its function is as follows. NDH-1 shuttles electrons from NADH, via FMN and iron-sulfur (Fe-S) centers, to quinones in the respiratory chain. The immediate electron acceptor for the enzyme in this species is believed to be ubiquinone. Couples the redox reaction to proton translocation (for every two electrons transferred, four hydrogen ions are translocated across the cytoplasmic membrane), and thus conserves the redox energy in a proton gradient. This subunit may bind ubiquinone. This chain is NADH-quinone oxidoreductase subunit H, found in Salmonella agona (strain SL483).